The following is a 34-amino-acid chain: Omega/M-ectatotoxin-Et1a subunit B (34 aa).

A disulfide bond links C10 and C32.

This sequence belongs to the ectatomin family. Ectatomin-Et subfamily. Heterodimer of an A and a B chain; disulfide-linked. In terms of tissue distribution, expressed by the venom gland.

It localises to the secreted. The protein resides in the target cell membrane. Functionally, algogenic for animals, human and insects. At high concentrations (0.5-1 uM), it acts as a pore-forming protein that forms nonselective cation channels both in cell and artificial membranes. It is weakly selective for cation over anions channel conductance is identical in both directions. At lower concentrations (1-10 nM), this heterodimer inhibits cardiac L-type calcium currents in isolated rat cardiac ventricular myocytes. The sequence is that of Omega/M-ectatotoxin-Et1a subunit B from Ectatomma tuberculatum (Selva ant).